The following is a 338-amino-acid chain: 5-dehydro-2-deoxygluconokinase (338 aa).

It belongs to the carbohydrate kinase PfkB family.

It catalyses the reaction 5-dehydro-2-deoxy-D-gluconate + ATP = 6-phospho-5-dehydro-2-deoxy-D-gluconate + ADP + H(+). It participates in polyol metabolism; myo-inositol degradation into acetyl-CoA; acetyl-CoA from myo-inositol: step 5/7. Functionally, catalyzes the phosphorylation of 5-dehydro-2-deoxy-D-gluconate (2-deoxy-5-keto-D-gluconate or DKG) to 6-phospho-5-dehydro-2-deoxy-D-gluconate (DKGP). This Clostridium perfringens (strain ATCC 13124 / DSM 756 / JCM 1290 / NCIMB 6125 / NCTC 8237 / Type A) protein is 5-dehydro-2-deoxygluconokinase.